A 189-amino-acid polypeptide reads, in one-letter code: NADH dehydrogenase [ubiquinone] 1 beta subcomplex subunit 5, mitochondrial (189 aa).

The transit peptide at M1 to H46 directs the protein to the mitochondrion. A helical membrane pass occupies residues F73 to I93.

Belongs to the complex I NDUFB5 subunit family. As to quaternary structure, complex I is composed of 45 different subunits.

It is found in the mitochondrion inner membrane. Accessory subunit of the mitochondrial membrane respiratory chain NADH dehydrogenase (Complex I), that is believed not to be involved in catalysis. Complex I functions in the transfer of electrons from NADH to the respiratory chain. The immediate electron acceptor for the enzyme is believed to be ubiquinone. This is NADH dehydrogenase [ubiquinone] 1 beta subcomplex subunit 5, mitochondrial (Ndufb5) from Mus musculus (Mouse).